The chain runs to 470 residues: Uronate isomerase (470 aa).

This sequence belongs to the metallo-dependent hydrolases superfamily. Uronate isomerase family.

The enzyme catalyses D-glucuronate = D-fructuronate. The catalysed reaction is aldehydo-D-galacturonate = keto-D-tagaturonate. It functions in the pathway carbohydrate metabolism; pentose and glucuronate interconversion. The sequence is that of Uronate isomerase from Vibrio vulnificus (strain YJ016).